A 448-amino-acid polypeptide reads, in one-letter code: Exodeoxyribonuclease 7 large subunit (448 aa).

Belongs to the XseA family. Heterooligomer composed of large and small subunits.

Its subcellular location is the cytoplasm. The enzyme catalyses Exonucleolytic cleavage in either 5'- to 3'- or 3'- to 5'-direction to yield nucleoside 5'-phosphates.. In terms of biological role, bidirectionally degrades single-stranded DNA into large acid-insoluble oligonucleotides, which are then degraded further into small acid-soluble oligonucleotides. This is Exodeoxyribonuclease 7 large subunit from Geobacillus kaustophilus (strain HTA426).